The primary structure comprises 98 residues: NADH-ubiquinone oxidoreductase chain 4L (98 aa).

The next 3 helical transmembrane spans lie at 1-21, 26-46, and 61-81; these read MPSI…GTLI, LMSS…LTSL, and IILL…LVMV.

The protein belongs to the complex I subunit 4L family. In terms of assembly, core subunit of respiratory chain NADH dehydrogenase (Complex I) which is composed of 45 different subunits.

The protein localises to the mitochondrion inner membrane. It carries out the reaction a ubiquinone + NADH + 5 H(+)(in) = a ubiquinol + NAD(+) + 4 H(+)(out). Core subunit of the mitochondrial membrane respiratory chain NADH dehydrogenase (Complex I) which catalyzes electron transfer from NADH through the respiratory chain, using ubiquinone as an electron acceptor. Part of the enzyme membrane arm which is embedded in the lipid bilayer and involved in proton translocation. The protein is NADH-ubiquinone oxidoreductase chain 4L (MT-ND4L) of Otolemur crassicaudatus (Brown greater galago).